Reading from the N-terminus, the 330-residue chain is Lipoyl synthase (330 aa).

The segment at 1–31 (MSDAPIATSSEVTQSPADYDPTKKQKSAEKT) is disordered. A compositionally biased stretch (polar residues) spans 7–16 (ATSSEVTQSP). Basic and acidic residues predominate over residues 20-31 (DPTKKQKSAEKT). Positions 77, 82, 88, 103, 107, 110, and 317 each coordinate [4Fe-4S] cluster. Residues 88–306 (CFGKGTATFM…EEEAYKMGFT (219 aa)) form the Radical SAM core domain.

It belongs to the radical SAM superfamily. Lipoyl synthase family. The cofactor is [4Fe-4S] cluster.

The protein resides in the cytoplasm. It carries out the reaction [[Fe-S] cluster scaffold protein carrying a second [4Fe-4S](2+) cluster] + N(6)-octanoyl-L-lysyl-[protein] + 2 oxidized [2Fe-2S]-[ferredoxin] + 2 S-adenosyl-L-methionine + 4 H(+) = [[Fe-S] cluster scaffold protein] + N(6)-[(R)-dihydrolipoyl]-L-lysyl-[protein] + 4 Fe(3+) + 2 hydrogen sulfide + 2 5'-deoxyadenosine + 2 L-methionine + 2 reduced [2Fe-2S]-[ferredoxin]. Its pathway is protein modification; protein lipoylation via endogenous pathway; protein N(6)-(lipoyl)lysine from octanoyl-[acyl-carrier-protein]: step 2/2. Its function is as follows. Catalyzes the radical-mediated insertion of two sulfur atoms into the C-6 and C-8 positions of the octanoyl moiety bound to the lipoyl domains of lipoate-dependent enzymes, thereby converting the octanoylated domains into lipoylated derivatives. In Cupriavidus metallidurans (strain ATCC 43123 / DSM 2839 / NBRC 102507 / CH34) (Ralstonia metallidurans), this protein is Lipoyl synthase.